Reading from the N-terminus, the 57-residue chain is Insulin (57 aa).

Intrachain disulfides connect Cys12/Cys43, Cys24/Cys56, and Cys42/Cys47.

Belongs to the insulin family. As to quaternary structure, heterodimer of a B chain and an A chain linked by two disulfide bonds.

Its subcellular location is the secreted. Insulin decreases blood glucose concentration. It increases cell permeability to monosaccharides, amino acids and fatty acids. It accelerates glycolysis, the pentose phosphate cycle, and glycogen synthesis in liver. In Lampetra fluviatilis (European river lamprey), this protein is Insulin (ins).